A 305-amino-acid polypeptide reads, in one-letter code: Cytochrome c biogenesis protein CcsA (305 aa).

The next 8 helical transmembrane spans lie at 13 to 33 (IYFSFILVITLVFGGTLVYPV), 42 to 62 (KGIIFPFFCITLNLIIRWFYS), 70 to 90 (LYESLMFFSWNFCLIPFFIDI), 97 to 117 (WIGVITAPSALFTHAFATLIL), 135 to 155 (WLIMHVTIIFLGYVTLLCGSL), 212 to 232 (YTIVIGFTFLTIGILSGAVWA), 242 to 262 (WDPKEIWALITWLIFANYIHI), and 276 to 296 (VASLGLFFVWICYFGVNILGI).

Belongs to the CcmF/CycK/Ccl1/NrfE/CcsA family. In terms of assembly, may interact with Ccs1.

It localises to the plastid. The protein resides in the chloroplast thylakoid membrane. Required during biogenesis of c-type cytochromes (cytochrome c6 and cytochrome f) at the step of heme attachment. In Welwitschia mirabilis (Tree tumbo), this protein is Cytochrome c biogenesis protein CcsA.